The sequence spans 70 residues: Large ribosomal subunit protein uL29 (70 aa).

This sequence belongs to the universal ribosomal protein uL29 family.

The chain is Large ribosomal subunit protein uL29 from Clostridium botulinum (strain Eklund 17B / Type B).